The primary structure comprises 119 residues: C-C motif chemokine 24 (119 aa).

Residues 1-26 (MAGLATFVVSLLLVTLCAHCIDPAGS) form the signal peptide. Intrachain disulfides connect C33-C58 and C34-C74. N-linked (GlcNAc...) asparagine glycans are attached at residues N54 and N115.

This sequence belongs to the intercrine beta (chemokine CC) family.

Its subcellular location is the secreted. Its function is as follows. Chemotactic for resting T-lymphocytes, and eosinophils. Has lower chemotactic activity for neutrophils but none for monocytes and activated lymphocytes. Is a strong suppressor of colony formation by a multipotential hematopoietic progenitor cell line. Binds to CCR3. In Canis lupus familiaris (Dog), this protein is C-C motif chemokine 24.